A 90-amino-acid chain; its full sequence is Small ribosomal subunit protein uS19 (90 aa).

The protein belongs to the universal ribosomal protein uS19 family.

Protein S19 forms a complex with S13 that binds strongly to the 16S ribosomal RNA. The chain is Small ribosomal subunit protein uS19 from Nitrosococcus oceani (strain ATCC 19707 / BCRC 17464 / JCM 30415 / NCIMB 11848 / C-107).